We begin with the raw amino-acid sequence, 193 residues long: C-type lectin domain family 3 member A homolog (193 aa).

The N-terminal stretch at 1-24 (MAQAGLLIWLFFTILLLDLTCTQS) is a signal peptide. 3 cysteine pairs are disulfide-bonded: Cys-66–Cys-76, Cys-93–Cys-188, and Cys-164–Cys-180. The 118-residue stretch at 72–189 (IHKKCYLSFE…CRSLKKYICE (118 aa)) folds into the C-type lectin domain.

The protein resides in the secreted. The sequence is that of C-type lectin domain family 3 member A homolog (clec3a) from Xenopus laevis (African clawed frog).